The chain runs to 311 residues: Methionyl-tRNA formyltransferase (311 aa).

(6S)-5,6,7,8-tetrahydrofolate is bound at residue 110-113 (SLLP).

The protein belongs to the Fmt family.

The catalysed reaction is L-methionyl-tRNA(fMet) + (6R)-10-formyltetrahydrofolate = N-formyl-L-methionyl-tRNA(fMet) + (6S)-5,6,7,8-tetrahydrofolate + H(+). Its function is as follows. Attaches a formyl group to the free amino group of methionyl-tRNA(fMet). The formyl group appears to play a dual role in the initiator identity of N-formylmethionyl-tRNA by promoting its recognition by IF2 and preventing the misappropriation of this tRNA by the elongation apparatus. This is Methionyl-tRNA formyltransferase from Streptococcus pneumoniae serotype 19F (strain G54).